Consider the following 287-residue polypeptide: UPF0725 protein At1g19060 (287 aa).

The protein belongs to the UPF0725 (EMB2204) family.

The polypeptide is UPF0725 protein At1g19060 (Arabidopsis thaliana (Mouse-ear cress)).